A 612-amino-acid chain; its full sequence is Alpha-glycerophosphate oxidase (612 aa).

21-49 (DLLIIGGGITGAGVALQAAASGLDTGLIE) lines the FAD pocket. Residues 398–408 (VETSTSEKELD) show a composition bias toward basic and acidic residues. The disordered stretch occupies residues 398–418 (VETSTSEKELDPSAVSRGSSF).

It belongs to the FAD-dependent glycerol-3-phosphate dehydrogenase family. The cofactor is FAD.

It is found in the cytoplasm. It catalyses the reaction sn-glycerol 3-phosphate + O2 = dihydroxyacetone phosphate + H2O2. The sequence is that of Alpha-glycerophosphate oxidase (glpO) from Streptococcus pyogenes serotype M3 (strain ATCC BAA-595 / MGAS315).